We begin with the raw amino-acid sequence, 134 residues long: Large ribosomal subunit protein eL14z (134 aa).

Belongs to the eukaryotic ribosomal protein eL14 family.

The polypeptide is Large ribosomal subunit protein eL14z (RPL14A) (Arabidopsis thaliana (Mouse-ear cress)).